Here is a 305-residue protein sequence, read N- to C-terminus: Deoxyribonuclease gamma (305 aa).

The N-terminal stretch at 1–20 (MSRELAPLLLLLLSIHSALA) is a signal peptide. The Bipartite nuclear localization signal signature appears at 35 to 51 (KQEDKNAMDVIVKVIKR). Residues Glu-100 and His-155 contribute to the active site. Cys-194 and Cys-231 are joined by a disulfide. A not required for free DNA-nuclease activity but required for activity towards liposome-coated DNA region spans residues 284 to 305 (SRAFTNSKKSVTLRKKTKSKRS). The Nuclear localization signal signature appears at 296-304 (LRKKTKSKR).

This sequence belongs to the DNase I family. Ca(2+) is required as a cofactor. The cofactor is Mg(2+). Poly-ADP-ribosylated by PARP1. ADP-ribosylation negatively regulates enzymatic activity during apoptosis. In terms of tissue distribution, liver and spleen.

It localises to the nucleus. The protein resides in the endoplasmic reticulum. It is found in the secreted. With respect to regulation, inhibited by zinc. Has DNA hydrolytic activity. Is capable of both single- and double-stranded DNA cleavage, producing DNA fragments with 3'-OH ends. Can cleave chromatin to nucleosomal units and cleaves nucleosomal and liposome-coated DNA. Acts in internucleosomal DNA fragmentation (INDF) during apoptosis and necrosis. The role in apoptosis includes myogenic and neuronal differentiation, and BCR-mediated clonal deletion of self-reactive B cells. Is active on chromatin in apoptotic cell-derived membrane-coated microparticles and thus suppresses anti-DNA autoimmunity. Together with DNASE1, plays a key role in degrading neutrophil extracellular traps (NETs). NETs are mainly composed of DNA fibers and are released by neutrophils to bind pathogens during inflammation. Degradation of intravascular NETs by DNASE1 and DNASE1L3 is required to prevent formation of clots that obstruct blood vessels and cause organ damage following inflammation. The protein is Deoxyribonuclease gamma of Homo sapiens (Human).